The sequence spans 131 residues: Prefoldin subunit beta (131 aa).

2 disordered regions span residues 19–41 (LQET…RESE) and 112–131 (LQGG…AGGA). A compositionally biased stretch (low complexity) spans 20–35 (QETAQQVAQQKQQAET). Residues 114–131 (GGAGGGPMGPGGPGAGGA) are compositionally biased toward gly residues.

Belongs to the prefoldin subunit beta family. In terms of assembly, heterohexamer of two alpha and four beta subunits.

It localises to the cytoplasm. Molecular chaperone capable of stabilizing a range of proteins. Seems to fulfill an ATP-independent, HSP70-like function in archaeal de novo protein folding. This is Prefoldin subunit beta from Natronomonas pharaonis (strain ATCC 35678 / DSM 2160 / CIP 103997 / JCM 8858 / NBRC 14720 / NCIMB 2260 / Gabara) (Halobacterium pharaonis).